A 340-amino-acid chain; its full sequence is Lipopolysaccharide heptosyltransferase 3 (340 aa).

This sequence belongs to the glycosyltransferase 9 family.

It catalyses the reaction an L-alpha-D-Hep-(1-&gt;3)-4-O-phospho-L-alpha-D-Hep-(1-&gt;5)-[alpha-Kdo-(2-&gt;4)]-alpha-Kdo-(2-&gt;6)-lipid A + ADP-L-glycero-beta-D-manno-heptose = an L-alpha-D-Hep-(1-&gt;7)-L-alpha-D-Hep-(1-&gt;3)-4-O-phospho-L-alpha-D-Hep-(1-&gt;5)-[alpha-Kdo-(2-&gt;4)]-alpha-Kdo-(2-&gt;6)-lipid A + ADP + H(+). It carries out the reaction L-alpha-D-Hep-(1-&gt;3)-4-O-phospho-L-alpha-D-Hep-(1-&gt;5)-[alpha-Kdo-(2-&gt;4)]-alpha-Kdo-(2-&gt;6)-lipid A (E. coli) + ADP-L-glycero-beta-D-manno-heptose = L-alpha-D-Hep-(1-&gt;7)-L-alpha-D-Hep-(1-&gt;3)-4-O-phospho-L-alpha-D-Hep-(1-&gt;5)-[alpha-Kdo-(2-&gt;4)]-alpha-Kdo-(2-&gt;6)-lipid A (E. coli) + ADP + H(+). It functions in the pathway bacterial outer membrane biogenesis; LPS core biosynthesis. Glycosyltransferase involved in the biosynthesis of the core oligosaccharide region of lipopolysaccharide (LPS). Catalyzes the addition of the third heptose unit (HepIII) to the second heptose unit (HepII) of the phospho-Hep2-Kdo2-lipid A module. The transfer of HepIII seems to be a prerequisite to the phosphorylation of the second heptose unit. In Escherichia coli, this protein is Lipopolysaccharide heptosyltransferase 3.